The sequence spans 1521 residues: Probable DNA topoisomerase 2 (1521 aa).

A compositionally biased stretch (acidic residues) spans 1–10 (MSDSENDYSD). Residues 1 to 87 (MSDSENDYSD…DDKSSSSDNE (87 aa)) form a disordered region. The segment covering 36 to 48 (SKKKASATRKPAA) has biased composition (basic residues). Low complexity predominate over residues 49 to 62 (KKATTTTTSTTKKS). ATP contacts are provided by residues Asn163, Asn192, 220–222 (SSH), and 233–240 (GRNGFGAK). The segment at 412-414 (NKK) is interaction with DNA. 446 to 448 (QTK) contacts ATP. The 114-residue stretch at 527-640 (CTLILTEGDS…TLLRMPGFLV (114 aa)) folds into the Toprim domain. Positions 533, 609, and 611 each coordinate Mg(2+). The Topo IIA-type catalytic domain occupies 771–1273 (IPNIVDGLKT…PIQEIYKRDL (503 aa)). The active-site O-(5'-phospho-DNA)-tyrosine intermediate is Tyr861. The tract at residues 1007–1047 (GTRKKKKEEKEKKAASRKGTKAKPTTTKRSKRVDDDDDNEK) is disordered. A compositionally biased stretch (basic residues) spans 1021-1037 (ASRKGTKAKPTTTKRSK). The interaction with DNA stretch occupies residues 1085–1094 (KLVSTINETN). 2 disordered regions span residues 1192–1222 (KIKKKKNAFDEEDAAISSDEEKDGAQEEQDD) and 1335–1521 (IPTT…SDSD). A compositionally biased stretch (acidic residues) spans 1201–1222 (DEEDAAISSDEEKDGAQEEQDD). The span at 1354–1368 (TTSTSTSTTTSSNTK) shows a compositional bias: low complexity. The segment covering 1422-1438 (LSDESDQESDQESDQGS) has biased composition (acidic residues). Over residues 1454–1467 (PTTIATKKATTSKS) the composition is skewed to low complexity. Positions 1468–1480 (KVIDDKSSDDEVI) are enriched in basic and acidic residues. Acidic residues predominate over residues 1503 to 1521 (SDSDDDDLYDNEESSSDSD).

The protein belongs to the type II topoisomerase family. Homodimer. It depends on Mg(2+) as a cofactor. The cofactor is Mn(2+). Requires Ca(2+) as cofactor.

It is found in the nucleus. The catalysed reaction is ATP-dependent breakage, passage and rejoining of double-stranded DNA.. Control of topological states of DNA by transient breakage and subsequent rejoining of DNA strands. Topoisomerase II makes double-strand breaks. This is Probable DNA topoisomerase 2 (top2) from Dictyostelium discoideum (Social amoeba).